The primary structure comprises 262 residues: Ribonuclease 3 (262 aa).

Positions 18-141 (LATFLKNLDI…LVGAIYEDMG (124 aa)) constitute an RNase III domain. Residue glutamate 59 participates in Mg(2+) binding. The active site involves aspartate 63. Mg(2+)-binding residues include aspartate 127 and glutamate 130. Glutamate 130 is a catalytic residue.

Belongs to the ribonuclease III family. In terms of assembly, homodimer. Mg(2+) serves as cofactor.

The protein localises to the cytoplasm. It carries out the reaction Endonucleolytic cleavage to 5'-phosphomonoester.. Functionally, digests double-stranded RNA. Involved in the processing of primary rRNA transcript to yield the immediate precursors to the large and small rRNAs (23S and 16S). Processes some mRNAs, and tRNAs when they are encoded in the rRNA operon. Processes pre-crRNA and tracrRNA of type II CRISPR loci if present in the organism. The chain is Ribonuclease 3 from Mycoplasma genitalium (strain ATCC 33530 / DSM 19775 / NCTC 10195 / G37) (Mycoplasmoides genitalium).